We begin with the raw amino-acid sequence, 485 residues long: Zinc finger protein 639 (485 aa).

Over residues 1–14 the composition is skewed to basic residues; sequence MNEYPKKRKRKTLH. Disordered regions lie at residues 1–23 and 54–80; these read MNEY…DSSG and DNKD…ARNR. Position 60 is a phosphoserine (Ser-60). Lys-76 is covalently cross-linked (Glycyl lysine isopeptide (Lys-Gly) (interchain with G-Cter in SUMO2)). Ser-88 carries the phosphoserine modification. The tract at residues 115-136 is disordered; the sequence is ASPESVHQHTQEESPIEVHTSE. Glycyl lysine isopeptide (Lys-Gly) (interchain with G-Cter in SUMO2) cross-links involve residues Lys-177, Lys-181, and Lys-226. C2H2-type zinc fingers lie at residues 204-227, 233-255, 260-283, 289-311, 374-397, 403-425, 431-454, and 460-482; these read YKCE…ILKH, NVCR…AKLH, YICK…ADTH, YWCE…FQEH, FVCQ…AIEH, HVCD…LNSH, YLCQ…DFKH, and HKCS…LQVH. The tract at residues 371–455 is interaction with CTNNA2; it reads KNFFVCQVCG…LKIHLDFKHS (85 aa).

The protein belongs to the krueppel C2H2-type zinc-finger protein family. As to quaternary structure, interacts with CTNNA2.

It is found in the nucleus. Binds DNA and may function as a transcriptional repressor. In Mus musculus (Mouse), this protein is Zinc finger protein 639 (Znf639).